Consider the following 1583-residue polypeptide: Dynamin-binding protein (1583 aa).

N-acetylmethionine is present on M1. SH3 domains lie at 2 to 61, 66 to 126, 145 to 204, and 243 to 302; these read EAGS…IVTI, EGER…ELCL, YSMG…LLGP, and QPGT…LFSK. Disordered stretches follow at residues 217–244, 306–329, and 366–464; these read HNDCIINGEEETPTGEEERGPEEDEEQP, EETMDLPKESSPTEIPDTSLDCRE, and ECEV…RGMY. The segment covering 224–243 has biased composition (acidic residues); sequence GEEETPTGEEERGPEEDEEQ. Over residues 366 to 379 the composition is skewed to basic and acidic residues; that stretch reads ECEVHKSSHQDEGT. A compositionally biased stretch (polar residues) spans 406 to 442; that stretch reads ETINGVSSQSQVPFRPRWQQNQYYSTTGRGHLSTEQY. Residue S495 is modified to Phosphoserine. 2 disordered regions span residues 594–656 and 671–693; these read RGSS…PSAQ and LFTHESCESPEKEGPENLDQTLD. Residues 637 to 653 show a composition bias toward pro residues; the sequence is PEPPLAMRPSRPAPLPP. Residues 675-685 show a composition bias toward basic and acidic residues; the sequence is ESCESPEKEGP. Residues 742–762 adopt a coiled-coil conformation; it reads LEFYESNIESLNMELQQLREM. In terms of domain architecture, DH spans 791-974; the sequence is KRAKVIEELL…KEINVNINEY (184 aa). A BAR domain is found at 1015–1224; sequence LKHLTGFAPQ…LKVAGREGNL (210 aa). The SH3 5 domain maps to 1292 to 1355; the sequence is PPEKLFQAER…YSSFLKPYNT (64 aa). Positions 1357-1496 are disordered; the sequence is RSHSDVSVGS…GRNGQGKDLT (140 aa). Low complexity predominate over residues 1361–1387; it reads DVSVGSHSSTESEQSSSSPRFPRQNSS. Residues 1388–1414 show a composition bias toward polar residues; that stretch reads GTLTFNPGSMAVSFTSGSCQKQPQDAT. Residues 1433-1456 show a composition bias toward low complexity; it reads SESSPSRCPSDPDSSPQPRSWDSP. Positions 1519-1582 constitute an SH3 6 domain; that stretch reads EGNQVYFAVY…PSNYIRKAEY (64 aa).

In terms of assembly, binds DNM1 via its N-terminal SH3 domains. The C-terminal SH3 domain binds a complex containing actin, tubulin, Hsp70 and actin-regulatory proteins, such as ENAH, EVL, WIRE, CR16, WAVE1 and NAP1L1. Interacts with FASLG. Interacts (via SH3 domain 6) with WASL. Interacts (via SH3 domain 6) interacts with ENAH. Interacts (via C-terminal domain) with TJP1; required for the apical cell-cell junction localization of DNMBP.

Its subcellular location is the cytoplasm. The protein localises to the golgi apparatus. The protein resides in the golgi stack. It localises to the cytoskeleton. It is found in the synapse. Its subcellular location is the cell junction. Plays a critical role as a guanine nucleotide exchange factor (GEF) for CDC42 in several intracellular processes associated with the actin and microtubule cytoskeleton. Regulates the structure of apical junctions in epithelial cells. Participates in the normal lumenogenesis of epithelial cell cysts by regulating spindle orientation. Plays a key role in ciliogenesis and cyst formation. May play a role in membrane trafficking between the cell surface and the Golgi. This chain is Dynamin-binding protein, found in Canis lupus familiaris (Dog).